The sequence spans 556 residues: Chaperone protein HscC (556 aa).

It belongs to the heat shock protein 70 family.

Its function is as follows. Probable chaperone. Has ATPase activity. Not stimulated by DnaJ. The protein is Chaperone protein HscC (hscC) of Escherichia coli (strain K12).